The primary structure comprises 376 residues: Succinyl-diaminopimelate desuccinylase (376 aa).

His-67 is a binding site for Zn(2+). Asp-69 is an active-site residue. A Zn(2+)-binding site is contributed by Asp-100. Glu-134 (proton acceptor) is an active-site residue. 3 residues coordinate Zn(2+): Glu-135, Glu-163, and His-349.

Belongs to the peptidase M20A family. DapE subfamily. Homodimer. Requires Zn(2+) as cofactor. Co(2+) serves as cofactor.

It catalyses the reaction N-succinyl-(2S,6S)-2,6-diaminopimelate + H2O = (2S,6S)-2,6-diaminopimelate + succinate. Its pathway is amino-acid biosynthesis; L-lysine biosynthesis via DAP pathway; LL-2,6-diaminopimelate from (S)-tetrahydrodipicolinate (succinylase route): step 3/3. Functionally, catalyzes the hydrolysis of N-succinyl-L,L-diaminopimelic acid (SDAP), forming succinate and LL-2,6-diaminopimelate (DAP), an intermediate involved in the bacterial biosynthesis of lysine and meso-diaminopimelic acid, an essential component of bacterial cell walls. The polypeptide is Succinyl-diaminopimelate desuccinylase (Haemophilus ducreyi (strain 35000HP / ATCC 700724)).